The chain runs to 715 residues: Metastasis-associated protein MTA1 (715 aa).

The region spanning 1-164 is the BAH domain; the sequence is MAANMYRVGD…PQQKTLLADK (164 aa). Residues 165–276 enclose the ELM2 domain; sequence GEIRVGNRYQ…KAISALVPQG (112 aa). A Glycyl lysine isopeptide (Lys-Gly) (interchain with G-Cter in ubiquitin) cross-link involves residue Lys182. Residues 283-335 enclose the SANT domain; sequence DEMEEWSASEANLFEEALEKYGKDFTDIQQDFLPWKSLTSIIEYYYMWKTTDR. Ser386 is subject to Phosphoserine. Residues 393–420 form a GATA-type; atypical zinc finger; that stretch reads CESCYTTQSYQWYSWGPPNMQCRLCASC. The segment at 435–460 is disordered; sequence RLDGERPGPNRSNMSPHGLPARSSGS. Phosphoserine is present on residues Ser446 and Ser449. A Glycyl lysine isopeptide (Lys-Gly) (interchain with G-Cter in SUMO2 and SUMO3) cross-link involves residue Lys509. Position 522 is a phosphoserine (Ser522). Residues 545 to 552 carry the SH3-binding motif; it reads PRPPKPDP. Residue Lys549 forms a Glycyl lysine isopeptide (Lys-Gly) (interchain with G-Cter in SUMO2) linkage. Thr564 is subject to Phosphothreonine. Phosphoserine is present on Ser576. At Thr578 the chain carries Phosphothreonine. Lys626 is subject to N6-acetyllysine; alternate. A Glycyl lysine isopeptide (Lys-Gly) (interchain with G-Cter in ubiquitin); alternate cross-link involves residue Lys626. At Ser639 the chain carries Phosphoserine. Residues 656 to 686 are interaction with RBBP4; it reads DVFYMATEETRKIRKLLSSSETKRAARRPYK. Residues 673 to 715 form a disordered region; the sequence is SSSETKRAARRPYKPIALRQSQALPPRPPPPAPVNDEPIVIED. Positions 696–705 match the SH3-binding motif; that stretch reads LPPRPPPPAP. The SUMO interaction motif 1 (SIM); crucial for efficient sumoylation signature appears at 711–715; that stretch reads IVIED.

It belongs to the metastasis-associated protein family. In terms of assembly, component of the nucleosome remodeling and deacetylase (NuRD) repressor complex, composed of core proteins MTA1, MTA2, MTA3, RBBP4, RBBP7, HDAC1, HDAC2, MBD2, MBD3, and peripherally associated proteins CDK2AP1, CDK2AP2, GATAD2A, GATAD2B, CHD3, CHD4 and CHD5. The exact stoichiometry of the NuRD complex is unknown, and some subunits such as MBD2 and MBD3, GATAD2A and GATAD2B, and CHD3, CHD4 and CHD5 define mutually exclusive NuRD complexes. Interacts with RBBP4; the interaction is direct. Interacts with BMAL1. Interacts with CLOCK. Interacts with COP1. Interacts with CSNK1G2 in the cytoplasm. Interacts with EP300. Interacts with HDAC2. Interacts with IFI16. Interacts with ITGB3BP/CENPR. Interacts with MBD3L2. Interacts with MDM2. Interacts with NACC2. Interacts with p53/TP53. Interacts with PIAS1. Interacts with PIAS3. Interacts with PIAS4. Interacts with PWWP2A. Interacts with PWWP2B. Interacts with SENP1. Interacts with SENP2. Interacts with SIX3; facilitates the binding of SIX3 to the core DNA motif of SIX3 promoter. Interacts with SUMO1. Interacts with SUMO2. Interacts with TFCP2L1; which is indispensable for TFCP2L1-mediated self-renewal-promoting effect and endoderm-inhibiting action. Interacts with TFAP2C. Interacts with TPR. Interacts with UBE2I/UBC9. Phosphorylation by CSNK1G2/CK1 triggered by estrogen enhances corepression of estrogen receptor (ER). In terms of processing, acetylation is essential for its transcriptional coactivator activity. Post-translationally, sumoylation positively regulates its transcriptional corepressor activity but does not affect the protein stability. Sumoylated preferentially by SUMO2 or SUMO3 than SUMO1. Sumoylation is enhanced by PIAS1/3/4 and preferentially sumoylated by SUMO2 in the presence of PIAS1/3/4. Desumoylated by SENP1. Ubiquitinated by COP1, which leads to proteasomal degradation. In terms of tissue distribution, widely expressed. High expression in brain, liver, kidney, and cardiac muscle, ovaries, adrenal glands and virgin mammary glands. Higher in tumors than in adjacent normal tissue from the same individual. Up-regulated in a wide variety of cancers including breast, liver, ovarian, and colorectal cancer and its expression levels are closely correlated with tumor aggressiveness and metastasis.

It localises to the nucleus. The protein resides in the cytoplasm. It is found in the nucleus envelope. Its subcellular location is the cytoskeleton. Functionally, transcriptional coregulator which can act as both a transcriptional corepressor and coactivator. Acts as a component of the histone deacetylase NuRD complex which participates in the remodeling of chromatin. In the NuRD complex, regulates transcription of its targets by modifying the acetylation status of the target chromatin and cofactor accessibility to the target DNA. In conjunction with other components of NuRD, acts as a transcriptional corepressor of BRCA1, ESR1, TFF1 and CDKN1A. Acts as a transcriptional coactivator of BCAS3, and SUMO2, independent of the NuRD complex. Stimulates the expression of WNT1 by inhibiting the expression of its transcriptional corepressor SIX3. Regulates p53-dependent and -independent DNA repair processes following genotoxic stress. Regulates the stability and function of p53/TP53 by inhibiting its ubiquitination by COP1 and MDM2 thereby regulating the p53-dependent DNA repair. Plays a role in the regulation of the circadian clock and is essential for the generation and maintenance of circadian rhythms under constant light and for normal entrainment of behavior to light-dark (LD) cycles. Positively regulates the CLOCK-BMAL1 heterodimer mediated transcriptional activation of its own transcription and the transcription of CRY1. Regulates deacetylation of BMAL1 by regulating SIRT1 expression, resulting in derepressing CRY1-mediated transcription repression. With TFCP2L1, promotes establishment and maintenance of pluripotency in embryonic stem cells (ESCs) and inhibits endoderm differentiation. In terms of biological role, binds to ESR1 and sequesters it in the cytoplasm and enhances its non-genomic responses. The protein is Metastasis-associated protein MTA1 (MTA1) of Homo sapiens (Human).